A 420-amino-acid chain; its full sequence is UDP-N-acetylglucosamine 1-carboxyvinyltransferase 2 (420 aa).

22–23 contacts phosphoenolpyruvate; that stretch reads KN. Arg-92 provides a ligand contact to UDP-N-acetyl-alpha-D-glucosamine. The active-site Proton donor is the Cys-116. Cys-116 is subject to 2-(S-cysteinyl)pyruvic acid O-phosphothioketal. Residues 121 to 125, Asp-307, and Ile-329 contribute to the UDP-N-acetyl-alpha-D-glucosamine site; that span reads RPIDL.

Belongs to the EPSP synthase family. MurA subfamily.

It is found in the cytoplasm. The catalysed reaction is phosphoenolpyruvate + UDP-N-acetyl-alpha-D-glucosamine = UDP-N-acetyl-3-O-(1-carboxyvinyl)-alpha-D-glucosamine + phosphate. It participates in cell wall biogenesis; peptidoglycan biosynthesis. Its function is as follows. Cell wall formation. Adds enolpyruvyl to UDP-N-acetylglucosamine. This is UDP-N-acetylglucosamine 1-carboxyvinyltransferase 2 from Streptococcus thermophilus (strain ATCC BAA-250 / LMG 18311).